The following is a 685-amino-acid chain: MSEDIIDRSLELGIQCFQGEDYKGAAELFSKSLQLARSYTDRSLEGIREKVGLPKRCLHDPSRVYHPRYLVLLDNRAATWEKLNKLDRALADAAYMITVDAYNLKGYIRRGKVLQKLGRYEEALQVYENGLKQAGEAEKTHAIHAPQKFLDIVYRQRSTIKELLQSRARSSRSLTQQTVAKEPKLKRPATIDSLMPGKKRSSSKAKIDYIATLPVEIIERIMANMDTRSIIRCYSVCKLWKYRLERLPHLYQEFRLSCCYKNMLGYVNFVGALASRTAEYSCRSIQCVSGNVQEEEKSIILLLSRLMIGTRQLALMAKKCKAERIIQHICENKKLRNGVQRLSITAPVHFGHKLNLHELYTRTTSMTHLELVLNFHTPSEHVGGHLFPWQDHAVAETNLESFTLMARNYSVHHVNVIEQFEYSSVLFKRLKKLCITGIDFRLGDRNNLKWISDMPNLQELWLERNTGIEFHELITQIVQVGAPKTLRHLTFREPPNRHFDRMDQSQLGLGEEALREVFQSLESLDLMNTRFDPQLLLLLLQPACENRIARLNIGNCPRLSFARDLEILTLIFQQLPALTDLLLPNVMEYTRQGMEVLRKNIKGMKLKRLDLSFIPSLKGYELLDLLKELKGINPLGLETLTINGCTAVAPQTVDYITRNGYAQKVMCAYERTQWEHLGINSFWYR.

3 TPR repeats span residues 6-39, 70-103, and 104-137; these read IDRS…ARSY, LVLL…DAYN, and LKGY…AGEA. Positions 207-254 constitute an F-box domain; that stretch reads IDYIATLPVEIIERIMANMDTRSIIRCYSVCKLWKYRLERLPHLYQEF. LRR repeat units lie at residues 300–323, 353–377, 454–480, 499–517, 518–542, 562–585, and 598–622; these read ILLL…CKAE, KLNL…NFHT, MPNL…IVQV, FDRM…LREV, FQSL…LLQP, ARDL…LLPN, and RKNI…GYEL.

Belongs to the DIA2 family. In terms of assembly, forms a SCF ubiquitin ligase complex which binds to DNA replication origins.

The protein resides in the nucleus. F-box protein component of a SCF ubiquitin ligase complex involved in ubiquitin-dependent protein degradation. The SCF-DIA2 complex is specifically involved in the pheromone induced degradation of phosphorylated TEC1. Involved in DNA replication, genome stability, and the control of cell cycle, probably through its association to replication origins to facilitate the ubiquitination of another origin-binding protein. The polypeptide is Protein DIA2 (DIA2) (Eremothecium gossypii (strain ATCC 10895 / CBS 109.51 / FGSC 9923 / NRRL Y-1056) (Yeast)).